Reading from the N-terminus, the 247-residue chain is 3-oxoacyl-[acyl-carrier-protein] reductase (247 aa).

Residue 11–35 (VTGASRGIGKATALALAATGMKVVV) coordinates NADP(+). Serine 143 is a substrate binding site. Tyrosine 156 acts as the Proton acceptor in catalysis.

The protein belongs to the short-chain dehydrogenases/reductases (SDR) family.

It carries out the reaction a (3R)-hydroxyacyl-[ACP] + NADP(+) = a 3-oxoacyl-[ACP] + NADPH + H(+). It participates in lipid metabolism; fatty acid biosynthesis. Its function is as follows. Catalyzes the NADPH-dependent reduction of beta-ketoacyl-ACP substrates to beta-hydroxyacyl-ACP products, the first reductive step in the elongation cycle of fatty acid biosynthesis. Is capable of reducing acetoacetyl-CoA, but less well than its paralog PhaB. The protein is 3-oxoacyl-[acyl-carrier-protein] reductase (fabG) of Synechocystis sp. (strain ATCC 27184 / PCC 6803 / Kazusa).